A 118-amino-acid polypeptide reads, in one-letter code: Large ribosomal subunit protein bL19 (118 aa).

Belongs to the bacterial ribosomal protein bL19 family.

This protein is located at the 30S-50S ribosomal subunit interface and may play a role in the structure and function of the aminoacyl-tRNA binding site. The chain is Large ribosomal subunit protein bL19 from Campylobacter concisus (strain 13826).